We begin with the raw amino-acid sequence, 189 residues long: Interferon alpha-17 (189 aa).

A signal peptide spans 1–23 (MALSFSLLMAVLVLSYKSICSLG). 2 disulfides stabilise this stretch: C24–C122 and C52–C162.

It belongs to the alpha/beta interferon family.

The protein resides in the secreted. Functionally, produced by macrophages, IFN-alpha have antiviral activities. Interferon stimulates the production of two enzymes: a protein kinase and an oligoadenylate synthetase. The sequence is that of Interferon alpha-17 (IFNA17) from Homo sapiens (Human).